Reading from the N-terminus, the 185-residue chain is dTTP/UTP pyrophosphatase (185 aa).

The Proton acceptor role is filled by Asp67.

It belongs to the Maf family. YhdE subfamily. It depends on a divalent metal cation as a cofactor.

It localises to the cytoplasm. The catalysed reaction is dTTP + H2O = dTMP + diphosphate + H(+). It catalyses the reaction UTP + H2O = UMP + diphosphate + H(+). Functionally, nucleoside triphosphate pyrophosphatase that hydrolyzes dTTP and UTP. May have a dual role in cell division arrest and in preventing the incorporation of modified nucleotides into cellular nucleic acids. The sequence is that of dTTP/UTP pyrophosphatase from Lacticaseibacillus casei (strain BL23) (Lactobacillus casei).